Consider the following 310-residue polypeptide: N-acetyl-gamma-glutamyl-phosphate reductase (310 aa).

Residue Cys117 is part of the active site.

This sequence belongs to the NAGSA dehydrogenase family. Type 2 subfamily.

It is found in the cytoplasm. The enzyme catalyses N-acetyl-L-glutamate 5-semialdehyde + phosphate + NADP(+) = N-acetyl-L-glutamyl 5-phosphate + NADPH + H(+). Its pathway is amino-acid biosynthesis; L-arginine biosynthesis; N(2)-acetyl-L-ornithine from L-glutamate: step 3/4. Catalyzes the NADPH-dependent reduction of N-acetyl-5-glutamyl phosphate to yield N-acetyl-L-glutamate 5-semialdehyde. The protein is N-acetyl-gamma-glutamyl-phosphate reductase of Brucella abortus (strain S19).